Here is a 517-residue protein sequence, read N- to C-terminus: Bifunctional purine biosynthesis protein PurH (517 aa).

One can recognise an MGS-like domain in the interval 1–145; that stretch reads MSPLALVSVS…KNHKYVSVLV (145 aa).

This sequence belongs to the PurH family.

It catalyses the reaction (6R)-10-formyltetrahydrofolate + 5-amino-1-(5-phospho-beta-D-ribosyl)imidazole-4-carboxamide = 5-formamido-1-(5-phospho-D-ribosyl)imidazole-4-carboxamide + (6S)-5,6,7,8-tetrahydrofolate. The catalysed reaction is IMP + H2O = 5-formamido-1-(5-phospho-D-ribosyl)imidazole-4-carboxamide. Its pathway is purine metabolism; IMP biosynthesis via de novo pathway; 5-formamido-1-(5-phospho-D-ribosyl)imidazole-4-carboxamide from 5-amino-1-(5-phospho-D-ribosyl)imidazole-4-carboxamide (10-formyl THF route): step 1/1. It participates in purine metabolism; IMP biosynthesis via de novo pathway; IMP from 5-formamido-1-(5-phospho-D-ribosyl)imidazole-4-carboxamide: step 1/1. The sequence is that of Bifunctional purine biosynthesis protein PurH from Prochlorococcus marinus (strain MIT 9215).